The sequence spans 329 residues: Alternative oxidase, mitochondrial (329 aa).

Residues 115–135 traverse the membrane as a helical segment; that stretch reads VISRCLFLETVAGVPGMVGGM. 3 residues coordinate Fe cation: Glu123, Glu162, and His165. Residues 181-201 form a helical membrane-spanning segment; that stretch reads VSIIITQAIMYLFLLVAYVIS. Fe cation is bound by residues Glu213, Glu266, and His269. Positions 300 to 329 are disordered; it reads EMYSNQPSGKTRTDFGSEGAKTASNVNKHV.

This sequence belongs to the alternative oxidase family. Homodimer; disulfide-linked. Requires Fe cation as cofactor.

The protein resides in the mitochondrion inner membrane. In terms of biological role, catalyzes cyanide-resistant oxygen consumption. May increase respiration when the cytochrome respiratory pathway is restricted, or in response to low temperatures. The protein is Alternative oxidase, mitochondrial (AOX) of Trypanosoma brucei brucei.